Consider the following 191-residue polypeptide: MAQLFFRYGSMNSGKTIEILKVAHNYEEQNKTVAIFTSGIDDRDQVGFISSRIGLKREATPIFSDTNIFEIVANIKPKPNCVLLDESQFLEKEHVFQLAKIVDDLNIPVIAYGLKNDFRNELFEGSKYLLLYADKLEEMKTICWFCAKKATMVLRVDDKGKPVYTGEQIMIGGNDHYYPVCRKCHANPPIK.

ATP is bound by residues 9–16 (GSMNSGKT) and 85–88 (DESQ). The active-site Proton acceptor is glutamate 86. Zn(2+) contacts are provided by cysteine 143, cysteine 146, cysteine 181, and cysteine 184.

Belongs to the thymidine kinase family. As to quaternary structure, homotetramer.

The protein resides in the cytoplasm. The enzyme catalyses thymidine + ATP = dTMP + ADP + H(+). In Listeria innocua serovar 6a (strain ATCC BAA-680 / CLIP 11262), this protein is Thymidine kinase.